A 569-amino-acid polypeptide reads, in one-letter code: Proline--tRNA ligase (569 aa).

The protein belongs to the class-II aminoacyl-tRNA synthetase family. ProS type 1 subfamily. Homodimer.

Its subcellular location is the cytoplasm. It carries out the reaction tRNA(Pro) + L-proline + ATP = L-prolyl-tRNA(Pro) + AMP + diphosphate. In terms of biological role, catalyzes the attachment of proline to tRNA(Pro) in a two-step reaction: proline is first activated by ATP to form Pro-AMP and then transferred to the acceptor end of tRNA(Pro). As ProRS can inadvertently accommodate and process non-cognate amino acids such as alanine and cysteine, to avoid such errors it has two additional distinct editing activities against alanine. One activity is designated as 'pretransfer' editing and involves the tRNA(Pro)-independent hydrolysis of activated Ala-AMP. The other activity is designated 'posttransfer' editing and involves deacylation of mischarged Ala-tRNA(Pro). The misacylated Cys-tRNA(Pro) is not edited by ProRS. This Colwellia psychrerythraea (strain 34H / ATCC BAA-681) (Vibrio psychroerythus) protein is Proline--tRNA ligase.